Consider the following 134-residue polypeptide: Small ribosomal subunit protein uS11 (134 aa).

Belongs to the universal ribosomal protein uS11 family. In terms of assembly, part of the 30S ribosomal subunit. Interacts with proteins S7 and S18. Binds to IF-3.

In terms of biological role, located on the platform of the 30S subunit, it bridges several disparate RNA helices of the 16S rRNA. Forms part of the Shine-Dalgarno cleft in the 70S ribosome. This is Small ribosomal subunit protein uS11 from Variovorax paradoxus (strain S110).